The primary structure comprises 976 residues: Villin-2 (976 aa).

6 Gelsolin-like repeats span residues Phe27–Gly77, Ile148–Ala188, Gly260–Lys302, Gly399–Asp450, Asn531–Glu571, and Phe633–Gln674. Positions Asn769–Phe917 are disordered. Residues Arg782–Ala794 are compositionally biased toward basic and acidic residues. 3 stretches are compositionally biased toward low complexity: residues Glu795–Lys812, Ser823–Ala841, and Asp848–Ser858. Ser890 bears the Phosphoserine mark. The span at Ser908–Phe917 shows a compositional bias: polar residues. Residues Gln911–Phe976 enclose the HP domain.

It belongs to the villin/gelsolin family. In terms of tissue distribution, expressed in all tissues examined. Mainly detected in the root epidermis and vasculature. Expressed in the root cap.

The protein localises to the cytoplasm. The protein resides in the cytoskeleton. Its function is as follows. Ca(2+)-regulated actin-binding protein. Involved in actin filaments bundling. Caps the barbed end of actin filaments and is able to sever them in a calcium-dependent manner. Required for the construction of actin collars in pollen tubes. Acts redundantly with VLN5 (AC Q9LVC6) to generate thick actin filament bundles and to regulate polarized pollen tube growth. Acts redundantly with VLN3 (AC O81645) to regulate directional organ growth and in sclerenchyma development. The polypeptide is Villin-2 (Arabidopsis thaliana (Mouse-ear cress)).